Here is a 222-residue protein sequence, read N- to C-terminus: RNA-binding protein KhpB (222 aa).

Residues 2 to 51 (DMVTVTAKTVEEAVTKALIELQTTSDKLTYEIVEKGSAGFLGIGSKPAII) are jag_N domain. The 80-residue stretch at 54-133 (KRKETLQDKA…KSSSDYIRVK (80 aa)) folds into the KH domain. The region spanning 138 to 204 (NYRERRKETL…EEPFRHVIIS (67 aa)) is the R3H domain.

Belongs to the KhpB RNA-binding protein family. As to quaternary structure, forms a complex with KhpA. Homodimer or homotrimer.

It is found in the cytoplasm. Its function is as follows. A probable RNA chaperone. Forms a complex with KhpA which binds to cellular RNA and controls its expression. Plays a role in peptidoglycan (PG) homeostasis and cell length regulation. In Clostridium symbiosum (Bacteroides symbiosus), this protein is RNA-binding protein KhpB.